A 491-amino-acid chain; its full sequence is Protein nucleotidyltransferase YdiU (491 aa).

Residues glycine 94, glycine 96, arginine 97, lysine 117, aspartate 129, glycine 130, arginine 180, and arginine 187 each contribute to the ATP site. The active-site Proton acceptor is aspartate 256. Asparagine 257 and aspartate 266 together coordinate Mg(2+). Aspartate 266 lines the ATP pocket.

It belongs to the SELO family. The cofactor is Mg(2+). It depends on Mn(2+) as a cofactor.

It carries out the reaction L-seryl-[protein] + ATP = 3-O-(5'-adenylyl)-L-seryl-[protein] + diphosphate. The enzyme catalyses L-threonyl-[protein] + ATP = 3-O-(5'-adenylyl)-L-threonyl-[protein] + diphosphate. It catalyses the reaction L-tyrosyl-[protein] + ATP = O-(5'-adenylyl)-L-tyrosyl-[protein] + diphosphate. The catalysed reaction is L-histidyl-[protein] + UTP = N(tele)-(5'-uridylyl)-L-histidyl-[protein] + diphosphate. It carries out the reaction L-seryl-[protein] + UTP = O-(5'-uridylyl)-L-seryl-[protein] + diphosphate. The enzyme catalyses L-tyrosyl-[protein] + UTP = O-(5'-uridylyl)-L-tyrosyl-[protein] + diphosphate. Nucleotidyltransferase involved in the post-translational modification of proteins. It can catalyze the addition of adenosine monophosphate (AMP) or uridine monophosphate (UMP) to a protein, resulting in modifications known as AMPylation and UMPylation. This Clostridium botulinum (strain 657 / Type Ba4) protein is Protein nucleotidyltransferase YdiU.